Here is a 216-residue protein sequence, read N- to C-terminus: Somatotropin (216 aa).

The N-terminal stretch at 1–26 (MAAGPRTSMLLAFALLCLPWTQEVGA) is a signal peptide. A Zn(2+)-binding site is contributed by H45. C78 and C189 are joined by a disulfide. The residue at position 131 (S131) is a Phosphoserine. A Zn(2+)-binding site is contributed by E198. C206 and C214 are joined by a disulfide.

The protein belongs to the somatotropin/prolactin family.

The protein localises to the secreted. Plays an important role in growth control. Its major role in stimulating body growth is to stimulate the liver and other tissues to secrete IGF1. It stimulates both the differentiation and proliferation of myoblasts. It also stimulates amino acid uptake and protein synthesis in muscle and other tissues. This chain is Somatotropin (GH1), found in Delphinus delphis (Short-beaked common dolphin).